The chain runs to 436 residues: GTPase Der (436 aa).

EngA-type G domains follow at residues 4-167 (PTIA…PNEE) and 175-351 (IKFS…QSQN). GTP-binding positions include 10 to 17 (GRPNVGKS), 57 to 61 (DTGGI), 119 to 122 (NKVD), 181 to 188 (GRPNVGKS), 229 to 233 (DTAGM), and 294 to 297 (NKWD). The region spanning 352-436 (TRIPSAVLND…PIHLIARKRK (85 aa)) is the KH-like domain.

Belongs to the TRAFAC class TrmE-Era-EngA-EngB-Septin-like GTPase superfamily. EngA (Der) GTPase family. As to quaternary structure, associates with the 50S ribosomal subunit.

Functionally, GTPase that plays an essential role in the late steps of ribosome biogenesis. The chain is GTPase Der from Streptococcus gordonii (strain Challis / ATCC 35105 / BCRC 15272 / CH1 / DL1 / V288).